We begin with the raw amino-acid sequence, 89 residues long: Elongation factor 1-beta (89 aa).

This sequence belongs to the EF-1-beta/EF-1-delta family.

Its function is as follows. Promotes the exchange of GDP for GTP in EF-1-alpha/GDP, thus allowing the regeneration of EF-1-alpha/GTP that could then be used to form the ternary complex EF-1-alpha/GTP/AAtRNA. The chain is Elongation factor 1-beta (ef1b) from Methanocaldococcus jannaschii (strain ATCC 43067 / DSM 2661 / JAL-1 / JCM 10045 / NBRC 100440) (Methanococcus jannaschii).